A 284-amino-acid polypeptide reads, in one-letter code: Bifunctional protein FolD (284 aa).

Residues 165–167 (GRS), Ser190, and Val231 each bind NADP(+).

The protein belongs to the tetrahydrofolate dehydrogenase/cyclohydrolase family. As to quaternary structure, homodimer.

It carries out the reaction (6R)-5,10-methylene-5,6,7,8-tetrahydrofolate + NADP(+) = (6R)-5,10-methenyltetrahydrofolate + NADPH. The enzyme catalyses (6R)-5,10-methenyltetrahydrofolate + H2O = (6R)-10-formyltetrahydrofolate + H(+). It participates in one-carbon metabolism; tetrahydrofolate interconversion. Catalyzes the oxidation of 5,10-methylenetetrahydrofolate to 5,10-methenyltetrahydrofolate and then the hydrolysis of 5,10-methenyltetrahydrofolate to 10-formyltetrahydrofolate. This chain is Bifunctional protein FolD, found in Geobacillus kaustophilus (strain HTA426).